The following is a 165-amino-acid chain: Pro-MCH (165 aa).

The N-terminal stretch at 1–21 (MAKMSLSSYLLILTFSLFSQG) is a signal peptide. Residues 68 to 88 (NDDSSFMNDEENKNSKNTGSK) form a disordered region. Isoleucine amide is present on isoleucine 143. Cysteine 153 and cysteine 162 are joined by a disulfide.

The protein belongs to the melanin-concentrating hormone family. Pro-MCH is processed differentially in the brain and in peripheral organs producing two neuropeptides; NEI and MCH. A third peptide, NGE, may also be produced. Preferential processing in neurons by prohormone convertase 2 (PC2) generates NEI. MCH is generated in neurons of the lateral hypothalmic area by several prohormone convertases including PC1/3, PC2 and PC5/6.

It localises to the secreted. Its function is as follows. MCH may act as a neurotransmitter or neuromodulator in a broad array of neuronal functions directed toward the regulation of goal-directed behavior, such as food intake, and general arousal. The sequence is that of Pro-MCH (PMCH) from Canis lupus familiaris (Dog).